The primary structure comprises 137 residues: ATP synthase epsilon chain, chloroplastic (137 aa).

This sequence belongs to the ATPase epsilon chain family. F-type ATPases have 2 components, CF(1) - the catalytic core - and CF(0) - the membrane proton channel. CF(1) has five subunits: alpha(3), beta(3), gamma(1), delta(1), epsilon(1). CF(0) has three main subunits: a, b and c.

The protein resides in the plastid. Its subcellular location is the chloroplast thylakoid membrane. In terms of biological role, produces ATP from ADP in the presence of a proton gradient across the membrane. This chain is ATP synthase epsilon chain, chloroplastic, found in Sorghum bicolor (Sorghum).